The sequence spans 419 residues: uncharacterized protein (419 aa).

[4Fe-4S] cluster contacts are provided by Cys-38, Cys-44, Cys-47, and Cys-126. S-adenosyl-L-methionine is bound by residues Gln-250, Tyr-280, Glu-301, and Asp-346. Residue Cys-373 is the Nucleophile of the active site.

Belongs to the class I-like SAM-binding methyltransferase superfamily. RNA M5U methyltransferase family.

This is an uncharacterized protein from Prochlorococcus marinus (strain SARG / CCMP1375 / SS120).